The sequence spans 143 residues: Small ribosomal subunit protein bS6 (143 aa).

The disordered stretch occupies residues 97–143 (DTEQSLIMKSKDEKGDKHERSERRRRDDEEGDVPAATDTDGDNAEAA). Basic and acidic residues predominate over residues 105 to 124 (KSKDEKGDKHERSERRRRDD).

The protein belongs to the bacterial ribosomal protein bS6 family.

Its function is as follows. Binds together with bS18 to 16S ribosomal RNA. The protein is Small ribosomal subunit protein bS6 of Xanthomonas oryzae pv. oryzae (strain MAFF 311018).